Here is a 146-residue protein sequence, read N- to C-terminus: Hemoglobin subunit beta (146 aa).

The Globin domain occupies 2–146; that stretch reads QWTAEEKQLI…VAHALARKYH (145 aa). Residues His63 and His92 each coordinate heme b.

Belongs to the globin family. Heterotetramer of two alpha chains and two beta chains. Red blood cells.

Involved in oxygen transport from the lung to the various peripheral tissues. This chain is Hemoglobin subunit beta (HBB), found in Passer montanus (Eurasian tree sparrow).